A 289-amino-acid polypeptide reads, in one-letter code: MNWISNVVPPKIRSFLRRDTPENLWIKCPESGELVFHKDLEANLFVIPGSGYHMYIAPKPRLDALFDEGVYETIPTPEVPLDPLKFRDVKRYTDRIKEYRQKTGAPDAVKLAYGKLQGLDAVVAVQDFAFLGGSLGMAAGEAVITGMQQALERQAPFIIFTASGGARMQEGMFSLMQMPRTTLMVQALREARLPYIVVLTHPTTGGVSASYAMLGDIQVAEPGAVIGFAGARVIEQTIHEHLPEGFQRAEYLQAHGMVDMVVRRHDLPAVLARLCAFLTNSPRRAPIPA.

Positions 24–289 constitute a CoA carboxyltransferase N-terminal domain; it reads LWIKCPESGE…NSPRRAPIPA (266 aa).

Belongs to the AccD/PCCB family. Acetyl-CoA carboxylase is a heterohexamer composed of biotin carboxyl carrier protein (AccB), biotin carboxylase (AccC) and two subunits each of ACCase subunit alpha (AccA) and ACCase subunit beta (AccD).

The protein resides in the cytoplasm. The catalysed reaction is N(6)-carboxybiotinyl-L-lysyl-[protein] + acetyl-CoA = N(6)-biotinyl-L-lysyl-[protein] + malonyl-CoA. It functions in the pathway lipid metabolism; malonyl-CoA biosynthesis; malonyl-CoA from acetyl-CoA: step 1/1. Functionally, component of the acetyl coenzyme A carboxylase (ACC) complex. Biotin carboxylase (BC) catalyzes the carboxylation of biotin on its carrier protein (BCCP) and then the CO(2) group is transferred by the transcarboxylase to acetyl-CoA to form malonyl-CoA. This chain is Acetyl-coenzyme A carboxylase carboxyl transferase subunit beta, found in Beijerinckia indica subsp. indica (strain ATCC 9039 / DSM 1715 / NCIMB 8712).